The sequence spans 476 residues: Stromelysin-2 (476 aa).

The N-terminal stretch at 1–17 (MEPLAILVLLCFPICSA) is a signal peptide. Positions 18-99 (YPLHGAVRQD…PRCGVPDVGG (82 aa)) are cleaved as a propeptide — activation peptide. A Cysteine switch motif is present at residues 90–97 (PRCGVPDV). Zn(2+) is bound by residues Cys92, His168, Asp170, His183, His196, and His218. The active site involves Glu219. His222 and His228 together coordinate Zn(2+). Hemopexin repeat units lie at residues 286–335 (PVKC…WPSL), 336–382 (PSGL…GFPP), 384–432 (VKKI…FPGI), and 433–476 (EPQV…WLLC). Cys289 and Cys476 are disulfide-bonded.

The protein belongs to the peptidase M10A family. Requires Zn(2+) as cofactor. Ca(2+) serves as cofactor.

It localises to the secreted. The protein localises to the extracellular space. Its subcellular location is the extracellular matrix. The catalysed reaction is Similar to stromelysin 1, but action on collagen types III, IV and V is weak.. Functionally, can degrade fibronectin, gelatins of type I, III, IV, and V; weakly collagens III, IV, and V. Activates procollagenase. This is Stromelysin-2 (Mmp10) from Rattus norvegicus (Rat).